The primary structure comprises 350 residues: Casein kinase II subunit alpha' (350 aa).

Positions 40–325 (YQLVRKLGRG…AKEAMEHPYF (286 aa)) constitute a Protein kinase domain. ATP is bound by residues 46 to 54 (LGRGKYSEV) and Lys-69. Catalysis depends on Asp-157, which acts as the Proton acceptor.

This sequence belongs to the protein kinase superfamily. Ser/Thr protein kinase family. CK2 subfamily. In terms of assembly, tetramer composed of an alpha chain, an alpha' and two beta chains.

It carries out the reaction L-seryl-[protein] + ATP = O-phospho-L-seryl-[protein] + ADP + H(+). It catalyses the reaction L-threonyl-[protein] + ATP = O-phospho-L-threonyl-[protein] + ADP + H(+). In terms of biological role, casein kinases are operationally defined by their preferential utilization of acidic proteins such as caseins as substrates. The alpha and alpha' chains contain the catalytic site. Participates in Wnt signaling. This is Casein kinase II subunit alpha' from Gallus gallus (Chicken).